An 896-amino-acid polypeptide reads, in one-letter code: Serine/threonine-protein kinase TAO3 (896 aa).

One can recognise a Protein kinase domain in the interval 24–277 (FVDLHEIGHG…SLELLRHDFV (254 aa)). ATP is bound by residues 30-38 (IGHGSFGAV) and Lys-53. Asp-147 serves as the catalytic Proton acceptor. 2 disordered regions span residues 316-366 (SRNG…SVNS) and 403-423 (DEAD…VQSQ). The span at 334–348 (GTSLTRKMDSLGSNH) shows a compositional bias: polar residues. A compositionally biased stretch (low complexity) spans 349–366 (SIPSTSVSTGSQSSSVNS). Residues 403–414 (DEADHRDPRPEL) are compositionally biased toward basic and acidic residues. Coiled coils occupy residues 450–513 (EQEN…SKRQ), 545–650 (SFLE…LIRQ), and 752–873 (LKSL…IETF). Residues 565-587 (LNEDHSTPKKEKQERISKHKENL) are compositionally biased toward basic and acidic residues. Residues 565–593 (LNEDHSTPKKEKQERISKHKENLQHTQAE) are disordered.

Belongs to the protein kinase superfamily. STE Ser/Thr protein kinase family. STE20 subfamily.

It is found in the cytoplasm. The protein localises to the cell membrane. Its subcellular location is the membrane raft. The protein resides in the lipid droplet. The enzyme catalyses L-seryl-[protein] + ATP = O-phospho-L-seryl-[protein] + ADP + H(+). The catalysed reaction is L-threonyl-[protein] + ATP = O-phospho-L-threonyl-[protein] + ADP + H(+). Functionally, serine/threonine-protein kinase that acts as a regulator of the p38/MAPK14 stress-activated MAPK cascade and of the MAPK8/JNK cascade. In response to DNA damage, involved in the G2/M transition DNA damage checkpoint by activating the p38/MAPK14 stress-activated MAPK cascade, probably by mediating phosphorylation of upstream MAP kinase kinases. Inhibits basal activity of the MAPK8/JNK cascade. The sequence is that of Serine/threonine-protein kinase TAO3 (taok3) from Xenopus laevis (African clawed frog).